The primary structure comprises 291 residues: Ribosomal RNA small subunit methyltransferase A (291 aa).

Residues H37, L39, G64, E85, D110, and N131 each contribute to the S-adenosyl-L-methionine site.

Belongs to the class I-like SAM-binding methyltransferase superfamily. rRNA adenine N(6)-methyltransferase family. RsmA subfamily.

It is found in the cytoplasm. It catalyses the reaction adenosine(1518)/adenosine(1519) in 16S rRNA + 4 S-adenosyl-L-methionine = N(6)-dimethyladenosine(1518)/N(6)-dimethyladenosine(1519) in 16S rRNA + 4 S-adenosyl-L-homocysteine + 4 H(+). Specifically dimethylates two adjacent adenosines (A1518 and A1519) in the loop of a conserved hairpin near the 3'-end of 16S rRNA in the 30S particle. May play a critical role in biogenesis of 30S subunits. The sequence is that of Ribosomal RNA small subunit methyltransferase A from Dehalococcoides mccartyi (strain CBDB1).